A 438-amino-acid polypeptide reads, in one-letter code: Arginine deiminase-like protein (438 aa).

Belongs to the arginine deiminase family.

This chain is Arginine deiminase-like protein, found in Mycoplasma pneumoniae (strain ATCC 29342 / M129 / Subtype 1) (Mycoplasmoides pneumoniae).